Consider the following 128-residue polypeptide: Holo-[acyl-carrier-protein] synthase (128 aa).

Mg(2+) is bound by residues D7 and E55.

It belongs to the P-Pant transferase superfamily. AcpS family. It depends on Mg(2+) as a cofactor.

Its subcellular location is the cytoplasm. It catalyses the reaction apo-[ACP] + CoA = holo-[ACP] + adenosine 3',5'-bisphosphate + H(+). In terms of biological role, transfers the 4'-phosphopantetheine moiety from coenzyme A to a Ser of acyl-carrier-protein. This chain is Holo-[acyl-carrier-protein] synthase, found in Moorella thermoacetica (strain ATCC 39073 / JCM 9320).